A 355-amino-acid chain; its full sequence is 3-isopropylmalate dehydrogenase (355 aa).

Substrate contacts are provided by Arg-98, Arg-108, Arg-132, and Asp-223. Residues Asp-223, Asp-247, and Asp-251 each coordinate Mg(2+). Position 283–295 (283–295) interacts with NAD(+); the sequence is GSAPDIAGQQKAD.

It belongs to the isocitrate and isopropylmalate dehydrogenases family. LeuB type 2 subfamily. Homodimer. The cofactor is Mg(2+). Mn(2+) is required as a cofactor.

Its subcellular location is the cytoplasm. The enzyme catalyses (2R,3S)-3-isopropylmalate + NAD(+) = 4-methyl-2-oxopentanoate + CO2 + NADH. The protein operates within amino-acid biosynthesis; L-leucine biosynthesis; L-leucine from 3-methyl-2-oxobutanoate: step 3/4. In terms of biological role, catalyzes the oxidation of 3-carboxy-2-hydroxy-4-methylpentanoate (3-isopropylmalate) to 3-carboxy-4-methyl-2-oxopentanoate. The product decarboxylates to 4-methyl-2 oxopentanoate. This chain is 3-isopropylmalate dehydrogenase, found in Clavibacter sepedonicus (Clavibacter michiganensis subsp. sepedonicus).